Reading from the N-terminus, the 98-residue chain is Ferredoxin-like protein (98 aa).

To ferredoxins from P.putida and C.tartarivorum, ferredoxin I from A.vinelandii, ferredoxin II from D.desulfuricans.

In terms of biological role, could be a 3Fe-4S cluster-containing protein. This Rhizobium leguminosarum protein is Ferredoxin-like protein (fixX).